Consider the following 130-residue polypeptide: Small ribosomal subunit protein uS8 (130 aa).

Belongs to the universal ribosomal protein uS8 family. In terms of assembly, part of the 30S ribosomal subunit. Contacts proteins S5 and S12.

In terms of biological role, one of the primary rRNA binding proteins, it binds directly to 16S rRNA central domain where it helps coordinate assembly of the platform of the 30S subunit. In Ruegeria pomeroyi (strain ATCC 700808 / DSM 15171 / DSS-3) (Silicibacter pomeroyi), this protein is Small ribosomal subunit protein uS8.